Reading from the N-terminus, the 1789-residue chain is Genome polyprotein (1789 aa).

A disordered region spans residues 1–25; it reads MMMASKDVVPTAASSENANNNSSIK. The interaction with host MAP1LC3A/LC3 stretch occupies residues 1–183; sequence MMMASKDVVP…MCPLPPVDQR (183 aa). Residues 12–23 are compositionally biased toward low complexity; it reads AASSENANNNSS. Residues 184–398 form an interaction with NTPase region; it reads STTPATEPTI…ASLLPDFHLQ (215 aa). Residues 301–398 are interaction with NS4; that stretch reads HPTQDWSRDT…ASLLPDFHLQ (98 aa). Host ER membrane association stretches follow at residues 318-349 and 360-398; these read KLEMVRDAVLAAINGLVSRPFKDLLGKLKPLN and TFMGVVEMVVLLLELFGIFWNPPDVSNFIASLLPDFHLQ. Residues 399 to 574 form an interaction with NS1-2 and NS4 and homooligomerization region; it reads GPEDLARDLV…GKTKAAEHLA (176 aa). The SF3 helicase domain occupies 532–697; it reads RISMARAALA…EHTRKVSPGD (166 aa). 560-567 provides a ligand contact to ATP; sequence GPPGIGKT. The segment at 651–756 is important for mitochondrion targeting; sequence AIVITTNAPG…AVALTMERQD (106 aa). The interval 826–832 is functions as endoplasmic reticulum export signal; the sequence is YIIESDG. Residues 865-910 are host membrane association; sequence RAVAYASCFQSAITTILQMAGSALVINRAVKRMFGTRTAAMALEGP. Positions 958-981 are disordered; that stretch reads DAVPEGKNKGKTKKGRGRKNNYNA. The segment covering 966–976 has biased composition (basic residues); that stretch reads KGKTKKGRGRK. The interval 989-994 is acidic; it reads DEEYEE. Residue Tyr992 is modified to O-(5'-phospho-RNA)-tyrosine. The tract at residues 1084 to 1100 is interaction with host EIF4G; it reads WADDDREVDYNEKINFE. Residues 1101–1281 form the Peptidase C37 domain; that stretch reads APPTLWSRVT…QAGEGETALE (181 aa). Catalysis depends on for 3CLpro activity residues His1130, Glu1154, and Cys1239. The region spanning 1516 to 1637 is the RdRp catalytic domain; it reads KNHFDADYTA…STDIDFDPAR (122 aa). 4 residues coordinate Mg(2+): Asp1520, Asp1522, Asp1624, and Glu1625.

As to quaternary structure, homodimer. Homooligomer. Interacts with NTPase; this interaction increases the proapoptotic activity of the NTPase and is crucial for the formation of the viral replication complex. Interacts with NS4; this interaction is crucial for the formation of the viral replication complex. Interacts (via N-terminus) with host VAPA. Interacts with host MAP1LC3A/LC3; this interaction does not seem to be linked to host autophagy, but rather plays a role in the formation of viral factories. In terms of assembly, homooligomer. Interacts with NS1-2; this interaction increases the proapoptotic activity of the NTPase and is crucial for the formation of the viral replication complex. Interacts with NS4; this interaction increases the proapoptotic activity of the NTPase. Homodimer. Monomer; in solution. As to quaternary structure, interacts with NTPase; this interaction increases the proapoptotic activity of the NTPase. Interacts with NS1-2; this interaction is crucial for the formation of the viral replication complex. In terms of assembly, monomer. Interacts with the RNA-directed RNA polymerase; this interaction induces the multimerization of the RdRp and enhances its activity. Interacts with host IEF4G1; this interaction plays a role in translation of viral proteins. Homohexamer; also forms fibrous hexameric oligomer. Interacts with the viral genome-linked protein; this interaction induces the multimerization of the RdRp and enhances its activity. Mg(2+) serves as cofactor. Requires Mn(2+) as cofactor. In terms of processing, specific enzymatic cleavages in vivo yield mature proteins. 3CLpro is first autocatalytically cleaved, then processes the whole polyprotein. NS1/2-3 and NS3-4 sites are cleaved rapidly and NS4-5, NS5-6, and NS6-7 sites are processed subsequently and less efficiently. Post-translationally, VPg is uridylylated by the polymerase and is covalently attached to the 5'-end of the polyadenylated genomic and subgenomic RNAs. This uridylylated form acts as a nucleotide-peptide primer for the polymerase. Cleaved by host CASP3/caspase 3 at 18-22 h.p.i. The cleavage allows NS1 secretion, which is essential for intestinal infection and resistance to IFN-lambda.

It is found in the host Golgi apparatus membrane. The protein localises to the secreted. Its subcellular location is the host endoplasmic reticulum membrane. The protein resides in the host cytoplasm. It localises to the host perinuclear region. The enzyme catalyses a ribonucleoside 5'-triphosphate + H2O = a ribonucleoside 5'-diphosphate + phosphate + H(+). It carries out the reaction Endopeptidase with a preference for cleavage when the P1 position is occupied by Glu-|-Xaa and the P1' position is occupied by Gly-|-Yaa.. It catalyses the reaction RNA(n) + a ribonucleoside 5'-triphosphate = RNA(n+1) + diphosphate. With respect to regulation, inhibited by the chemical compound K36/GC376, which covalently binds to the nucleophilic cysteine residue. Inhibited by various macrocyclic inhibitors. Inhibited by the guanidine salt GuHCl. Induces the proliferation of the host smooth ER membranes forming long tubular structures. These remodeled membranes probably form the viral factories that contain the replication complex. Induces the disassembly of host Golgi. May play a role in viral replication by interacting with host VAPA, a vesicle-associated membrane protein that plays a role in SNARE-mediated vesicle fusion. This interaction may target replication complex to intracellular membranes. Its function is as follows. Displays NTPase activity and RNA helix-unwinding activity. Displays RNA chaperone-like activity and destabilizes dsRNA. Induces the formation of convoluted membranes derived from the host ER. These remodeled membranes probably form the viral factories that contain the replication complex. Initiates host cell death by targeting the mitochondrial outer membrane, leading to the permeabilization of mitochondria, programmed host cell death and viral egress. Probably plays a role in preventing the assembly of host stress granules. Functionally, probable key protein responsible for the formation of membrane alterations by the virus. Induces the formation of convoluted membranes derived from the host ER. These remodeled membranes probably form the viral factories that contain the replication complex. May play a role in targeting replication complex to intracellular membranes. Induces the disassembly of host Golgi and antagonism of Golgi-dependent cellular protein secretion, probably via the mislocalization of COPII-coated vesicles. In terms of biological role, viral genome-linked protein is covalently linked to the 5'-end of the positive-strand, negative-strand genomic RNAs and subgenomic RNA. Acts as a genome-linked replication primer. May recruit ribosome to viral RNA thereby promoting viral proteins translation. Interacts with host translation initiation complex to allow the translation of viral proteins. Induces the formation of aggregates of RNA-directed RNA polymerase in the presence of RNA. Through its interaction with the viral RNA-directed RNA polymerase, plays a crucial role in enhancing the polymerase activity. Processes the polyprotein. 3CLpro-RdRp is first released by autocleavage, then all other proteins are cleaved. May cleave host polyadenylate-binding protein thereby inhibiting cellular translation. Its function is as follows. Replicates genomic and antigenomic RNA by recognizing replications specific signals. Also transcribes a subgenomic mRNA by initiating RNA synthesis internally on antigenomic RNA. This sgRNA codes for structural proteins. Catalyzes the covalent attachment VPg with viral RNAs. This Norovirus (strain Human/NoV/United States/Norwalk/1968/GI) (Hu/NV/NV/1968/US) protein is Genome polyprotein.